A 146-amino-acid chain; its full sequence is Globin-1 (146 aa).

The region spanning 9–146 is the Globin domain; it reads QLTADVKKDL…KLVAVVQAAL (138 aa). His101 contacts heme b.

Belongs to the globin family. In terms of assembly, homodimer.

It is found in the cytoplasm. In Anadara inaequivalvis (Inequivalve ark), this protein is Globin-1.